The following is a 66-amino-acid chain: Large ribosomal subunit protein bL35 (66 aa).

A compositionally biased stretch (basic residues) spans 1 to 26 (MPKMKTHRGSAKRFKKTGSGKLKRSH). The segment at 1–48 (MPKMKTHRGSAKRFKKTGSGKLKRSHAYTSHLFANKSQKQKRKLRKSA) is disordered.

The protein belongs to the bacterial ribosomal protein bL35 family.

The protein is Large ribosomal subunit protein bL35 of Bacillus licheniformis (strain ATCC 14580 / DSM 13 / JCM 2505 / CCUG 7422 / NBRC 12200 / NCIMB 9375 / NCTC 10341 / NRRL NRS-1264 / Gibson 46).